A 226-amino-acid chain; its full sequence is Transcriptional regulatory protein PcoR (226 aa).

A Response regulatory domain is found at 3-117 (RILIVEDEQK…ELVARVRTLL (115 aa)). At Asp52 the chain carries 4-aspartylphosphate. The segment at residues 125 to 223 (ATVCTIADMT…VRGAGYVLEI (99 aa)) is a DNA-binding region (ompR/PhoB-type).

Post-translationally, phosphorylated by PcoS.

The protein localises to the cytoplasm. Probable member of a two-component regulatory system PcoS/PcoR. May be involved in the activation of copper resistance gene operon pcoABCD by binding to a specific site on the cop operon promoter (copper box). The polypeptide is Transcriptional regulatory protein PcoR (pcoR) (Escherichia coli).